A 303-amino-acid chain; its full sequence is Probable 5-dehydro-4-deoxyglucarate dehydratase (303 aa).

The protein belongs to the DapA family.

The enzyme catalyses 5-dehydro-4-deoxy-D-glucarate + H(+) = 2,5-dioxopentanoate + CO2 + H2O. It functions in the pathway carbohydrate acid metabolism; D-glucarate degradation; 2,5-dioxopentanoate from D-glucarate: step 2/2. This is Probable 5-dehydro-4-deoxyglucarate dehydratase from Leptothrix cholodnii (strain ATCC 51168 / LMG 8142 / SP-6) (Leptothrix discophora (strain SP-6)).